We begin with the raw amino-acid sequence, 575 residues long: DnaJ homolog subfamily C member 11 homolog (575 aa).

The J domain maps to 35–103; the sequence is DFYSILNISR…KLRAIYDQFG (69 aa). Positions 427–456 form a coiled coil; the sequence is KKKEQKKIMEKKEKYADQARKAKRKAEMDI.

Belongs to the DNAJC11 family.

In Dictyostelium discoideum (Social amoeba), this protein is DnaJ homolog subfamily C member 11 homolog (dnajc11).